A 192-amino-acid chain; its full sequence is Ion-translocating oxidoreductase complex subunit B (192 aa).

The tract at residues Met1–Ser26 is hydrophobic. Residues Glu32 to Val91 form the 4Fe-4S domain. Positions 49, 52, 57, 74, 117, 120, 123, 127, 147, 150, 153, and 157 each coordinate [4Fe-4S] cluster. 2 4Fe-4S ferredoxin-type domains span residues Met108–Arg137 and Ala138–Val167.

Belongs to the 4Fe4S bacterial-type ferredoxin family. RnfB subfamily. The complex is composed of six subunits: RsxA, RsxB, RsxC, RsxD, RsxE and RsxG. It depends on [4Fe-4S] cluster as a cofactor.

It localises to the cell inner membrane. Part of a membrane-bound complex that couples electron transfer with translocation of ions across the membrane. Required to maintain the reduced state of SoxR. This Salmonella agona (strain SL483) protein is Ion-translocating oxidoreductase complex subunit B.